The chain runs to 2196 residues: Genome polyprotein (2196 aa).

Glycine 2 is lipidated: N-myristoyl glycine; by host. At 2-1506 the chain is on the cytoplasmic side; the sequence is GAQVSTQKTG…HVSRAFICLQ (1505 aa). The tract at residues 568–584 is amphipathic alpha-helix; that stretch reads DLQGDSEHAVESAVSRV. Catalysis depends on for protease 2A activity residues histidine 883 and aspartate 901. Residues cysteine 918 and cysteine 920 each coordinate Zn(2+). Cysteine 972 (for protease 2A activity) is an active-site residue. 2 residues coordinate Zn(2+): cysteine 978 and histidine 980. The tract at residues 1112 to 1184 is membrane-binding; sequence NNGWLKKFTE…EQSAPSQSDQ (73 aa). Residues 1112–1250 form an oligomerization region; the sequence is NNGWLKKFTE…SPGAGKSVAT (139 aa). The segment at 1133–1137 is RNA-binding; the sequence is AIKIQ. One can recognise an SF3 helicase domain in the interval 1216–1372; sequence EKKMSNYIQF…SMYSQNGKIN (157 aa). Zn(2+) contacts are provided by cysteine 1380, cysteine 1392, and cysteine 1397. The segment at 1380-1397 adopts a C4-type; degenerate zinc-finger fold; the sequence is CDEECCPVNFKKCCPLVC. The segment at 1424–1431 is RNA-binding; it reads EYNHRHSV. An oligomerization region spans residues 1435 to 1440; that stretch reads LEALFQ. The stretch at 1507-1522 is an intramembrane region; sequence ALTTFVSVAGIIYIIY. At 1523 to 2196 the chain is on the cytoplasmic side; it reads KLFAGFQGAY…TLRRKWLDSF (674 aa). Tyrosine 1532 carries the O-(5'-phospho-RNA)-tyrosine modification. Residues 1552 to 1730 enclose the Peptidase C3 domain; that stretch reads GPAFEFAVAM…FSAALLKHYF (179 aa). Catalysis depends on for protease 3C activity residues histidine 1591, glutamate 1622, and cysteine 1698. Residues 1961–2077 form the RdRp catalytic domain; it reads GHLIAFDYSG…SYPWPIDASL (117 aa). Aspartate 1967 and aspartate 2063 together coordinate Mg(2+).

Belongs to the picornaviruses polyprotein family. Interacts with capsid protein VP1 and capsid protein VP3 to form heterotrimeric protomers. As to quaternary structure, interacts with capsid protein VP0, and capsid protein VP3 to form heterotrimeric protomers. Five protomers subsequently associate to form pentamers which serve as building blocks for the capsid. Interacts with capsid protein VP2, capsid protein VP3 and capsid protein VP4 following cleavage of capsid protein VP0. In terms of assembly, interacts with capsid protein VP1 and capsid protein VP3 in the mature capsid. Interacts with capsid protein VP0 and capsid protein VP1 to form heterotrimeric protomers. Five protomers subsequently associate to form pentamers which serve as building blocks for the capsid. Interacts with capsid protein VP4 in the mature capsid. Interacts with protein 2C; this interaction may be important for virion morphogenesis. As to quaternary structure, interacts with capsid protein VP1 and capsid protein VP3. In terms of assembly, homodimer. Homohexamer; forms a hexameric ring structure with 6-fold symmetry characteristic of AAA+ ATPases. Interacts (via N-terminus) with host RTN3 (via reticulon domain); this interaction is important for viral replication. Interacts with capsid protein VP3; this interaction may be important for virion morphogenesis. As to quaternary structure, interacts with protein 3CD. In terms of assembly, homodimer. Interacts with host GBF1. Interacts (via GOLD domain) with host ACBD3 (via GOLD domain); this interaction allows the formation of a viral protein 3A/ACBD3 heterotetramer with a 2:2 stoichiometry, which will stimulate the recruitment of host PI4KB in order to synthesize PI4P at the viral RNA replication sites. Interacts with RNA-directed RNA polymerase. As to quaternary structure, interacts with protein 3AB and with RNA-directed RNA polymerase. In terms of assembly, interacts with Viral protein genome-linked and with protein 3CD. The cofactor is Mg(2+). Specific enzymatic cleavages in vivo by the viral proteases yield processing intermediates and the mature proteins. In terms of processing, myristoylation is required for the formation of pentamers during virus assembly. Further assembly of 12 pentamers and a molecule of genomic RNA generates the provirion. Post-translationally, during virion maturation, immature virions are rendered infectious following cleavage of VP0 into VP4 and VP2. This maturation seems to be an autocatalytic event triggered by the presence of RNA in the capsid and it is followed by a conformational change infectious virion. Myristoylation is required during RNA encapsidation and formation of the mature virus particle. In terms of processing, VPg is uridylylated by the polymerase into VPg-pUpU. This acts as a nucleotide-peptide primer for the genomic RNA replication.

Its subcellular location is the virion. It localises to the host cytoplasm. The protein localises to the host cytoplasmic vesicle membrane. The protein resides in the host nucleus. The catalysed reaction is a ribonucleoside 5'-triphosphate + H2O = a ribonucleoside 5'-diphosphate + phosphate + H(+). The enzyme catalyses Selective cleavage of Tyr-|-Gly bond in the picornavirus polyprotein.. It carries out the reaction RNA(n) + a ribonucleoside 5'-triphosphate = RNA(n+1) + diphosphate. It catalyses the reaction Selective cleavage of Gln-|-Gly bond in the poliovirus polyprotein. In other picornavirus reactions Glu may be substituted for Gln, and Ser or Thr for Gly.. Replication or transcription is subject to high level of random mutations by the nucleotide analog ribavirin. Its function is as follows. Forms an icosahedral capsid of pseudo T=3 symmetry with capsid proteins VP2 and VP3. The capsid is 300 Angstroms in diameter, composed of 60 copies of each capsid protein and enclosing the viral positive strand RNA genome. Capsid protein VP1 mainly forms the vertices of the capsid. Capsid protein VP1 interacts with host cell receptor to provide virion attachment to target host cells. This attachment induces virion internalization. Tyrosine kinases are probably involved in the entry process. After binding to its receptor, the capsid undergoes conformational changes. Capsid protein VP1 N-terminus (that contains an amphipathic alpha-helix) and capsid protein VP4 are externalized. Together, they shape a pore in the host membrane through which viral genome is translocated to host cell cytoplasm. In terms of biological role, forms an icosahedral capsid of pseudo T=3 symmetry with capsid proteins VP2 and VP3. The capsid is 300 Angstroms in diameter, composed of 60 copies of each capsid protein and enclosing the viral positive strand RNA genome. Lies on the inner surface of the capsid shell. After binding to the host receptor, the capsid undergoes conformational changes. Capsid protein VP4 is released, Capsid protein VP1 N-terminus is externalized, and together, they shape a pore in the host membrane through which the viral genome is translocated into the host cell cytoplasm. Functionally, component of immature procapsids, which is cleaved into capsid proteins VP4 and VP2 after maturation. Allows the capsid to remain inactive before the maturation step. Its function is as follows. Cysteine protease that cleaves viral polyprotein and specific host proteins. It is responsible for the autocatalytic cleavage between the P1 and P2 regions, which is the first cleavage occurring in the polyprotein. Also cleaves the host translation initiation factor EIF4G1, in order to shut down the capped cellular mRNA translation. Inhibits the host nucleus-cytoplasm protein and RNA trafficking by cleaving host members of the nuclear pores. Counteracts stress granule formation probably by antagonizing its assembly or promoting its dissassembly. In terms of biological role, plays an essential role in the virus replication cycle by acting as a viroporin. Creates a pore in the host endoplasmic reticulum and as a consequence releases Ca2+ in the cytoplasm of infected cell. In turn, high levels of cytoplasmic calcium may trigger membrane trafficking and transport of viral ER-associated proteins to viroplasms, sites of viral genome replication. Induces and associates with structural rearrangements of intracellular membranes. Displays RNA-binding, nucleotide binding and NTPase activities. May play a role in virion morphogenesis and viral RNA encapsidation by interacting with the capsid protein VP3. Functionally, localizes the viral replication complex to the surface of membranous vesicles. Together with protein 3CD binds the Cis-Active RNA Element (CRE) which is involved in RNA synthesis initiation. Acts as a cofactor to stimulate the activity of 3D polymerase, maybe through a nucleid acid chaperone activity. Its function is as follows. Localizes the viral replication complex to the surface of membranous vesicles. It inhibits host cell endoplasmic reticulum-to-Golgi apparatus transport and causes the disassembly of the Golgi complex, possibly through GBF1 interaction. This would result in depletion of MHC, trail receptors and IFN receptors at the host cell surface. Plays an essential role in viral RNA replication by recruiting ACBD3 and PI4KB at the viral replication sites, thereby allowing the formation of the rearranged membranous structures where viral replication takes place. In terms of biological role, acts as a primer for viral RNA replication and remains covalently bound to viral genomic RNA. VPg is uridylylated prior to priming replication into VPg-pUpU. The oriI viral genomic sequence may act as a template for this. The VPg-pUpU is then used as primer on the genomic RNA poly(A) by the RNA-dependent RNA polymerase to replicate the viral genome. During genome replication, the VPg-RNA linkage is removed by the host TDP2, thereby accelerating replication. During the late stage of the replication cycle, host TDP2 is excluded from sites of viral RNA synthesis and encapsidation, allowing for the generation of progeny virions. Involved in the viral replication complex and viral polypeptide maturation. It exhibits protease activity with a specificity and catalytic efficiency that is different from protease 3C. Protein 3CD lacks polymerase activity. Protein 3CD binds to the 5'UTR of the viral genome. Functionally, replicates the viral genomic RNA on the surface of intracellular membranes. May form linear arrays of subunits that propagate along a strong head-to-tail interaction called interface-I. Covalently attaches UMP to a tyrosine of VPg, which is used to prime RNA synthesis. The positive stranded RNA genome is first replicated at virus induced membranous vesicles, creating a dsRNA genomic replication form. This dsRNA is then used as template to synthesize positive stranded RNA genomes. ss(+)RNA genomes are either translated, replicated or encapsidated. Its function is as follows. Major viral protease that mediates proteolytic processing of the polyprotein. Cleaves host EIF5B, contributing to host translation shutoff. Also cleaves host PABPC1, contributing to host translation shutoff. Cleaves host NLRP1, triggers host N-glycine-mediated degradation of the autoinhibitory NLRP1 N-terminal fragment. The protein is Genome polyprotein of Homo sapiens (Human).